A 126-amino-acid polypeptide reads, in one-letter code: Aspartate 1-decarboxylase (126 aa).

Serine 25 functions as the Schiff-base intermediate with substrate; via pyruvic acid in the catalytic mechanism. Serine 25 carries the post-translational modification Pyruvic acid (Ser). Residue threonine 57 coordinates substrate. Tyrosine 58 acts as the Proton donor in catalysis. 73–75 (GGA) lines the substrate pocket.

Belongs to the PanD family. As to quaternary structure, heterooctamer of four alpha and four beta subunits. Pyruvate is required as a cofactor. In terms of processing, is synthesized initially as an inactive proenzyme, which is activated by self-cleavage at a specific serine bond to produce a beta-subunit with a hydroxyl group at its C-terminus and an alpha-subunit with a pyruvoyl group at its N-terminus.

The protein resides in the cytoplasm. It carries out the reaction L-aspartate + H(+) = beta-alanine + CO2. It functions in the pathway cofactor biosynthesis; (R)-pantothenate biosynthesis; beta-alanine from L-aspartate: step 1/1. Its function is as follows. Catalyzes the pyruvoyl-dependent decarboxylation of aspartate to produce beta-alanine. The chain is Aspartate 1-decarboxylase from Xanthomonas campestris pv. campestris (strain B100).